A 413-amino-acid polypeptide reads, in one-letter code: Tyrosine--tRNA ligase (413 aa).

The short motif at Pro59–His68 is the 'HIGH' region element. The 'KMSKS' region signature appears at Lys243–Ser247. Residue Lys246 participates in ATP binding. In terms of domain architecture, S4 RNA-binding spans Leu351–Leu411.

This sequence belongs to the class-I aminoacyl-tRNA synthetase family. TyrS type 2 subfamily. Homodimer.

Its subcellular location is the cytoplasm. The enzyme catalyses tRNA(Tyr) + L-tyrosine + ATP = L-tyrosyl-tRNA(Tyr) + AMP + diphosphate + H(+). Functionally, catalyzes the attachment of tyrosine to tRNA(Tyr) in a two-step reaction: tyrosine is first activated by ATP to form Tyr-AMP and then transferred to the acceptor end of tRNA(Tyr). The protein is Tyrosine--tRNA ligase of Burkholderia pseudomallei (strain 1710b).